The following is a 175-amino-acid chain: Alpha-crystallin B chain (175 aa).

M1 carries the post-translational modification N-acetylmethionine. A Phosphoserine modification is found at S19. S41 is a glycosylation site (O-linked (GlcNAc) serine). A phosphoserine mark is found at S45 and S59. The 109-residue stretch at 56-164 folds into the sHSP domain; it reads RAPSWIDTGL…PERTIPITRE (109 aa). H83 lines the Zn(2+) pocket. An N6-acetyllysine modification is found at K92. The Zn(2+) site is built by H104, E106, H111, and H119. The interval 142-175 is disordered; it reads VLTVNGPRRQASGPERTIPITREEKPAVTAAPKK. N6-acetyllysine is present on K166. O-linked (GlcNAc) threonine glycosylation is present at T170.

The protein belongs to the small heat shock protein (HSP20) family. Heteromer composed of three CRYAA and one CRYAB subunits. Aggregates with homologous proteins, including the small heat shock protein HSPB1, to form large heteromeric complexes. Inter-subunit bridging via zinc ions enhances stability, which is crucial as there is no protein turn over in the lens. Interacts with HSPBAP1 and TTN/titin. Interacts with TMEM109; in the cellular response to DNA damage. Interacts with DES; binds rapidly during early stages of DES filament assembly and a reduced binding seen in the later stages. Interacts with TMED10; the interaction mediates the translocation from the cytoplasm into the ERGIC (endoplasmic reticulum-Golgi intermediate compartment) and thereby secretion. Interacts with ATP6V1A and with MTOR, forming a ternary complex.

It is found in the cytoplasm. It localises to the nucleus. Its subcellular location is the secreted. The protein resides in the lysosome. Functionally, may contribute to the transparency and refractive index of the lens. Has chaperone-like activity, preventing aggregation of various proteins under a wide range of stress conditions. In lens epithelial cells, stabilizes the ATP6V1A protein, preventing its degradation by the proteasome. This Sus scrofa (Pig) protein is Alpha-crystallin B chain (CRYAB).